Reading from the N-terminus, the 248-residue chain is Small ribosomal subunit protein uS3 (248 aa).

A KH type-2 domain is found at 39-107 (IRQMLLKQLK…EVFINIVEIR (69 aa)). The disordered stretch occupies residues 214–248 (AVDKRMTAESEGPSSGRPPRRDRDRDRDRDRDSAA). Over residues 232 to 248 (PRRDRDRDRDRDRDSAA) the composition is skewed to basic and acidic residues.

This sequence belongs to the universal ribosomal protein uS3 family. In terms of assembly, part of the 30S ribosomal subunit. Forms a tight complex with proteins S10 and S14.

Functionally, binds the lower part of the 30S subunit head. Binds mRNA in the 70S ribosome, positioning it for translation. The chain is Small ribosomal subunit protein uS3 from Azorhizobium caulinodans (strain ATCC 43989 / DSM 5975 / JCM 20966 / LMG 6465 / NBRC 14845 / NCIMB 13405 / ORS 571).